Here is a 224-residue protein sequence, read N- to C-terminus: Ribosomal RNA small subunit methyltransferase I (224 aa).

Belongs to the methyltransferase superfamily. RsmI family.

Its subcellular location is the cytoplasm. It catalyses the reaction cytidine(1402) in 16S rRNA + S-adenosyl-L-methionine = 2'-O-methylcytidine(1402) in 16S rRNA + S-adenosyl-L-homocysteine + H(+). In terms of biological role, catalyzes the 2'-O-methylation of the ribose of cytidine 1402 (C1402) in 16S rRNA. This Borrelia garinii subsp. bavariensis (strain ATCC BAA-2496 / DSM 23469 / PBi) (Borreliella bavariensis) protein is Ribosomal RNA small subunit methyltransferase I.